The primary structure comprises 505 residues: Retinoic acid receptor gamma (505 aa).

Disordered stretches follow at residues 1–57 and 113–134; these read MMKF…SSKD and SLSVETQSTSSEEMVPSSPSPP. 2 stretches are compositionally biased toward basic and acidic residues: residues 12–22 and 32–46; these read DGGERPEEEGK and MGKEEFTGSVGKEEA. The modulating stretch occupies residues 52–142; the sequence is MSSSKDRICS…PPPPPRVYKP (91 aa). The span at 115–124 shows a compositional bias: polar residues; it reads SVETQSTSSE. 2 NR C4-type zinc fingers span residues 143–163 and 179–203; these read CFVCNDKSSGYHYGVSSCEGC and CHRDKNCQINKVTRNRCQYCRLQKC. The segment at residues 143–208 is a DNA-binding region (nuclear receptor); sequence CFVCNDKSSG…RLQKCFEVGM (66 aa). The interval 209–237 is hinge; sequence SKEAVRNDRNKKKKEIKEEVVTDSYEMPP. Positions 238 to 472 constitute an NR LBD domain; sequence EMEALIQKVS…PLIREMLENP (235 aa). The disordered stretch occupies residues 462–505; that stretch reads PPLIREMLENPEAFEDDASPPPKSEQKPIKVEEKPGEKTSTKDP. Over residues 485–505 the composition is skewed to basic and acidic residues; it reads SEQKPIKVEEKPGEKTSTKDP.

Belongs to the nuclear hormone receptor family. NR1 subfamily. As to quaternary structure, heterodimer; with a RXR molecule. Binds DNA preferentially as a RAR/RXR heterodimer. In terms of tissue distribution, isoform Delta-1A and Isoform Delta-1B are most abundant in regenerating limbs, tails, and the anterior half of the lower jaw. Isoform Delta-2 is broadly and uniformly distributed.

It localises to the nucleus. Receptor for retinoic acid. Retinoic acid receptors bind as heterodimers to their target response elements in response to their ligands, all-trans or 9-cis retinoic acid, and regulate gene expression in various biological processes. The RAR/RXR heterodimers bind to the retinoic acid response elements (RARE) composed of tandem 5'-AGGTCA-3' sites known as DR1-DR5. The chain is Retinoic acid receptor gamma (RARG) from Notophthalmus viridescens (Eastern newt).